A 406-amino-acid chain; its full sequence is Tryptophan 2,3-dioxygenase (406 aa).

Residues 72–76 and Arg144 contribute to the substrate site; that span reads FIITH. His328 contacts heme. Thr342 is a substrate binding site.

It belongs to the tryptophan 2,3-dioxygenase family. Homotetramer. Dimer of dimers. The cofactor is heme.

The catalysed reaction is L-tryptophan + O2 = N-formyl-L-kynurenine. The protein operates within amino-acid degradation; L-tryptophan degradation via kynurenine pathway; L-kynurenine from L-tryptophan: step 1/2. Functionally, heme-dependent dioxygenase that catalyzes the oxidative cleavage of the L-tryptophan (L-Trp) pyrrole ring and converts L-tryptophan to N-formyl-L-kynurenine. Catalyzes the oxidative cleavage of the indole moiety. The protein is Tryptophan 2,3-dioxygenase of Homo sapiens (Human).